The chain runs to 497 residues: Probable cytosol aminopeptidase (497 aa).

Residues lysine 265 and aspartate 270 each coordinate Mn(2+). Lysine 277 is an active-site residue. 3 residues coordinate Mn(2+): aspartate 288, aspartate 347, and glutamate 349. Arginine 351 is a catalytic residue.

It belongs to the peptidase M17 family. The cofactor is Mn(2+).

The protein resides in the cytoplasm. It carries out the reaction Release of an N-terminal amino acid, Xaa-|-Yaa-, in which Xaa is preferably Leu, but may be other amino acids including Pro although not Arg or Lys, and Yaa may be Pro. Amino acid amides and methyl esters are also readily hydrolyzed, but rates on arylamides are exceedingly low.. The catalysed reaction is Release of an N-terminal amino acid, preferentially leucine, but not glutamic or aspartic acids.. In terms of biological role, presumably involved in the processing and regular turnover of intracellular proteins. Catalyzes the removal of unsubstituted N-terminal amino acids from various peptides. This is Probable cytosol aminopeptidase from Geobacillus thermodenitrificans (strain NG80-2).